The sequence spans 142 residues: Transcription antitermination protein NusB (142 aa).

Belongs to the NusB family.

Involved in transcription antitermination. Required for transcription of ribosomal RNA (rRNA) genes. Binds specifically to the boxA antiterminator sequence of the ribosomal RNA (rrn) operons. The protein is Transcription antitermination protein NusB of Trichlorobacter lovleyi (strain ATCC BAA-1151 / DSM 17278 / SZ) (Geobacter lovleyi).